A 212-amino-acid chain; its full sequence is Pyridoxine/pyridoxamine 5'-phosphate oxidase (212 aa).

Substrate contacts are provided by residues 8-11 (RREY) and lysine 66. FMN contacts are provided by residues 61–66 (RIVLLK), 76–77 (FT), arginine 82, lysine 83, and glutamine 105. Substrate is bound by residues tyrosine 123, arginine 127, and serine 131. Residues 140 to 141 (QS) and tryptophan 185 contribute to the FMN site. 191–193 (RLH) serves as a coordination point for substrate. Residue arginine 195 participates in FMN binding.

Belongs to the pyridoxamine 5'-phosphate oxidase family. Homodimer. Requires FMN as cofactor.

The catalysed reaction is pyridoxamine 5'-phosphate + O2 + H2O = pyridoxal 5'-phosphate + H2O2 + NH4(+). The enzyme catalyses pyridoxine 5'-phosphate + O2 = pyridoxal 5'-phosphate + H2O2. The protein operates within cofactor metabolism; pyridoxal 5'-phosphate salvage; pyridoxal 5'-phosphate from pyridoxamine 5'-phosphate: step 1/1. Its pathway is cofactor metabolism; pyridoxal 5'-phosphate salvage; pyridoxal 5'-phosphate from pyridoxine 5'-phosphate: step 1/1. In terms of biological role, catalyzes the oxidation of either pyridoxine 5'-phosphate (PNP) or pyridoxamine 5'-phosphate (PMP) into pyridoxal 5'-phosphate (PLP). This chain is Pyridoxine/pyridoxamine 5'-phosphate oxidase, found in Shewanella sp. (strain MR-4).